Here is a 285-residue protein sequence, read N- to C-terminus: DNA repair protein RecO (285 aa).

The protein belongs to the RecO family.

Involved in DNA repair and RecF pathway recombination. The chain is DNA repair protein RecO from Synechococcus sp. (strain JA-2-3B'a(2-13)) (Cyanobacteria bacterium Yellowstone B-Prime).